Consider the following 177-residue polypeptide: Basic form of pathogenesis-related protein 1 (177 aa).

The signal sequence occupies residues 1–23 (MGFLTTIVACFITFAILIHSSKA). At Q24 the chain carries Pyrrolidone carboxylic acid. Positions 31-147 (LNPHNAARRQ…NGWFFITCNY (117 aa)) constitute an SCP domain.

This sequence belongs to the CRISP family. Post-translationally, two disulfide bonds are present.

In terms of biological role, probably involved in the defense reaction of plants against pathogens. This chain is Basic form of pathogenesis-related protein 1, found in Nicotiana tabacum (Common tobacco).